Here is a 158-residue protein sequence, read N- to C-terminus: 6,7-dimethyl-8-ribityllumazine synthase (158 aa).

5-amino-6-(D-ribitylamino)uracil-binding positions include Trp28, Thr59–Glu61, and Val81–Val83. Asp86 to Thr87 is a (2S)-2-hydroxy-3-oxobutyl phosphate binding site. The active-site Proton donor is His89. Phe114 provides a ligand contact to 5-amino-6-(D-ribitylamino)uracil. Arg128 contacts (2S)-2-hydroxy-3-oxobutyl phosphate.

The protein belongs to the DMRL synthase family.

The catalysed reaction is (2S)-2-hydroxy-3-oxobutyl phosphate + 5-amino-6-(D-ribitylamino)uracil = 6,7-dimethyl-8-(1-D-ribityl)lumazine + phosphate + 2 H2O + H(+). The protein operates within cofactor biosynthesis; riboflavin biosynthesis; riboflavin from 2-hydroxy-3-oxobutyl phosphate and 5-amino-6-(D-ribitylamino)uracil: step 1/2. Catalyzes the formation of 6,7-dimethyl-8-ribityllumazine by condensation of 5-amino-6-(D-ribitylamino)uracil with 3,4-dihydroxy-2-butanone 4-phosphate. This is the penultimate step in the biosynthesis of riboflavin. The protein is 6,7-dimethyl-8-ribityllumazine synthase of Micrococcus luteus (strain ATCC 4698 / DSM 20030 / JCM 1464 / CCM 169 / CCUG 5858 / IAM 1056 / NBRC 3333 / NCIMB 9278 / NCTC 2665 / VKM Ac-2230) (Micrococcus lysodeikticus).